A 670-amino-acid polypeptide reads, in one-letter code: MEGERRAYSKEVHQRINKQLEEIRRLEEVRGDLQVQISAAQNQVKRLRDSQRLENMDRLLKGRAQVQAEIEELQEQTRALDKQIQEWETRIFTHSKNVRSPGFILDQKVKIRRRIRILENQLDRVTCHFDNQLVRNAALREELDLLRIDRNRYLNVDRKLKKEIHHLHHLVSTLILSSTSAYAVREEAKAKMGLLRERAEKEEAQSEMEAQVLQRQILHLEQLHHFLKLKNNDRQPDPDVLEKREKQAGEVAEGVWKTSQERLVLCYEDALNKLSQLMGESDPDLLVQKYLEIEERNFAEFNFINEQNLELEHVQEEIKEMQEALVSARASKDDQHLLQEQQQKVLQQRMDKVHSEAERLEARFQDVRGQLEKLKADIQLLFTKAHCDSSMIDDLLGVKTSMGDRDMGLFLSLIEKRLVELLTVQAFLHAQSFTSLADAALLVLGQSLEDLPKKMAPLQPPDTLEDPPGFEASDDYPMSREELLSQVEKLVELQEQAEAQRQKDLAAAAAKLDGTLSVDLASTQRAGSSTVLVPTRHPHAIPGSILSHKTSRDRGSLGHVTFGGLSSSTGHLPSHITHGDPNTGHVTFGSTSASSGGHVTFRPVSASSYLGSTGYVGSSRGGENTEGGVESGGTASDSSGGLGSSRDHVSSTGPASSTGPGSSTSKDSRG.

3 coiled-coil regions span residues 9–155 (SKEV…RYLN), 183–224 (AVRE…EQLH), and 302–381 (NFIN…IQLL). The tract at residues 454–473 (KMAPLQPPDTLEDPPGFEAS) is disordered. Phosphoserine is present on serine 517. 2 disordered regions span residues 526-596 (AGSS…ASSG) and 616-670 (VGSS…DSRG). Residues 584 to 596 (GHVTFGSTSASSG) show a composition bias toward polar residues. The segment covering 650 to 670 (SSTGPASSTGPGSSTSKDSRG) has biased composition (low complexity).

The protein belongs to the ODA1/DCC2 family. As to quaternary structure, component of the outer dynein arm-docking complex along with ODAD2, ODAD3, ODAD4 and CLXN. Interacts with ODAD3. Interacts with ODAD4; this interaction may facilitate the recruitment and/or attachment of outer dynein arm docking complex proteins, including ODAD1, ODAD3, and ODAD4 to ciliary axonemes. Interacts with DNAH9. Interacts with MNS1. Interacts with PIERCE1 and PIERCE2; the interactions link the outer dynein arms docking complex (ODA-DC) to the internal microtubule inner proteins (MIP) in cilium axoneme. Expressed in nasal epithelial cells. Highly expressed in testis and also detected in lung, brain and kidney.

Its subcellular location is the cytoplasm. The protein localises to the cytoskeleton. The protein resides in the cilium axoneme. Its function is as follows. Component of the outer dynein arm-docking complex (ODA-DC) that mediates outer dynein arms (ODA) binding onto the doublet microtubule. Involved in mediating assembly of both ODAs and their axonemal docking complex onto ciliary microtubules. This is Outer dynein arm-docking complex subunit 1 from Homo sapiens (Human).